We begin with the raw amino-acid sequence, 578 residues long: MASLGFLFFFLLPLILLELSSSRSVMAAKTRHFKWDVEYIHWSPDGEESVVMGINGQFPGPTIRAKAGDTVAVHLTNKLHTEGVVIHWHGIRQIGTPWADGTAAISQCAINPGETFLYRFKVDKAGTYFYHGHYGMQRSAGLYGSLIVEVGEGEKEPFHYDGEFNLLLSDWWHKGSHEQEVDLSSNPLRWIGEPQTLLLNGRGQYNCSLAARFSKPPLPQCKLRGGEQYAPQILRVRPNKIYRLRVASTTALGSLSLAIGGHKMVVVEADGNYVQPFSVQDMDIYSGESYSVLFKTDQDPTKNYWISINVRGREPKTPQGLTLLNYLPNSASKFPTLPPPIAPLWNDYNHSKSFSNKIFALMGSPKPPPQNHRRIILLNTQNKIDGYTKWAINNVSLVLPTQLYLGSIRYGINAFDTKPPPDNFPKDYDVLKQAPNSNSTYGNGVYMLKFNTTIDIILQNANALAKDVSEIHPWHLHGHDFWVLGYGEGKFSEKDVKKFNLKNPPLRNTAVIFPFGWTALRFVTDNPGVWAFHCHIEPHLHMGMGVIFAEGVHLVKKIPKEALACGLTGKMLMSNKHN.

Residues Met1 to Ala28 form the signal peptide. 2 Plastocyanin-like domains span residues Thr30–Glu149 and Asp161–Pro328. Residues His87, His89, His131, and His133 each contribute to the Cu cation site. Cystine bridges form between Cys108–Cys565 and Cys207–Cys221. The N-linked (GlcNAc...) asparagine glycan is linked to Asn206. N-linked (GlcNAc...) asparagine glycans are attached at residues Asn349, Asn394, Asn438, and Asn451. The Plastocyanin-like 3 domain maps to His372–Glu550. Cu cation-binding residues include His472, His475, His477, His533, Cys534, His535, His539, and Met544.

Belongs to the multicopper oxidase family. As to quaternary structure, dimer. It depends on Cu cation as a cofactor. As to expression, highly expressed in young and growing tissues.

It localises to the secreted. It catalyses the reaction 4 L-ascorbate + O2 = 4 monodehydro-L-ascorbate radical + 2 H2O. In terms of biological role, may be involved in a redox system involving ascorbic acid. In Nicotiana tabacum (Common tobacco), this protein is L-ascorbate oxidase (AAO).